The following is a 215-amino-acid chain: LysM and putative peptidoglycan-binding domain-containing protein 1 (215 aa).

One can recognise a LysM domain in the interval 37-81 (LEHQVQPGDTLQGLALRYGVSMEQIKRANRLYTNDSIFLKKSLYI). Polar residues-rich tracts occupy residues 86–103 (GQSDLSDDQNSQEGSETE) and 173–189 (GNRTPSRQNSPQTQQRS). Disordered stretches follow at residues 86–133 (GQSD…PVDF) and 148–203 (AVKK…TRAS).

This is LysM and putative peptidoglycan-binding domain-containing protein 1 (lysmd1) from Xenopus laevis (African clawed frog).